We begin with the raw amino-acid sequence, 241 residues long: Ribonuclease PH (241 aa).

Phosphate is bound by residues Arg-87 and 125 to 127 (GTR).

The protein belongs to the RNase PH family. Homohexameric ring arranged as a trimer of dimers.

It carries out the reaction tRNA(n+1) + phosphate = tRNA(n) + a ribonucleoside 5'-diphosphate. In terms of biological role, phosphorolytic 3'-5' exoribonuclease that plays an important role in tRNA 3'-end maturation. Removes nucleotide residues following the 3'-CCA terminus of tRNAs; can also add nucleotides to the ends of RNA molecules by using nucleoside diphosphates as substrates, but this may not be physiologically important. Probably plays a role in initiation of 16S rRNA degradation (leading to ribosome degradation) during starvation. In Salinispora tropica (strain ATCC BAA-916 / DSM 44818 / JCM 13857 / NBRC 105044 / CNB-440), this protein is Ribonuclease PH.